The chain runs to 106 residues: UPF0145 protein Pput_2816 (106 aa).

Belongs to the UPF0145 family.

This is UPF0145 protein Pput_2816 from Pseudomonas putida (strain ATCC 700007 / DSM 6899 / JCM 31910 / BCRC 17059 / LMG 24140 / F1).